The primary structure comprises 124 residues: MARLSGVDLPREKRMEIALTYIYGIGRTRSKEILDATGVSPDLRSKDLSDEDLAKLREYIEESLKVEGDLRREVQADIRRKIEIGCYQGLRHRRGLPVRGQRTKTNARTRKGPKRTIAGKKKAK.

Residues 95–124 (GLPVRGQRTKTNARTRKGPKRTIAGKKKAK) form a disordered region.

The protein belongs to the universal ribosomal protein uS13 family. Part of the 30S ribosomal subunit. Forms a loose heterodimer with protein S19. Forms two bridges to the 50S subunit in the 70S ribosome.

Functionally, located at the top of the head of the 30S subunit, it contacts several helices of the 16S rRNA. In the 70S ribosome it contacts the 23S rRNA (bridge B1a) and protein L5 of the 50S subunit (bridge B1b), connecting the 2 subunits; these bridges are implicated in subunit movement. Contacts the tRNAs in the A and P-sites. This is Small ribosomal subunit protein uS13 from Rhodococcus erythropolis (strain PR4 / NBRC 100887).